A 526-amino-acid chain; its full sequence is MHSLQCRRVIPFGKLSLSLHAPRNALRFVHKPAFTFESYKSLHRDPKYAKLSEQDVQVFKSIIGKDGSLIDGLDKSTDPADLDAFNIDWMNKYRGKTQLALKPKTTQQVSEILKYCNQKKLAVVPQGGNTGLVGGSVPVFDEIVLNLGLMNQIHTFDEISGVITLDSGVILENADNFLAEKGYMFPLDLGAKGSCQVGGCAATAAGGLRLLRYGSLHGSILGMEAVLPDGTILDNLVTLRKDNTGLDIKQLFIGSEGYLGVITKLSVICPKRPSSTNVAFFGVPSYENVLKAFSETRSHLTEILSAFELMDNTSQTLVDKYSGTQRPLEDEHPFYVLVETQGSNKEHDEQKITALVEDLLEKEIISDGVLAQDESQLRVLWERREGITECLAKAGSGVYKYDVSLPLPVLYDLVNDTKKRLIEFNLLDDTPEHPVIDVVGFGHMGDGNLHLNIAVRQFDKRVEKCLEPWVYEWVSRHRGSISAEHGLGLLKKPFVGYSKSKEMIHLMKTLKNVFDPNGIMLPYKYV.

Positions 93–272 (YRGKTQLALK…TKLSVICPKR (180 aa)) constitute an FAD-binding PCMH-type domain.

It belongs to the FAD-binding oxidoreductase/transferase type 4 family. FAD serves as cofactor.

The protein localises to the mitochondrion matrix. It catalyses the reaction (R)-lactate + 2 Fe(III)-[cytochrome c] = 2 Fe(II)-[cytochrome c] + pyruvate + 2 H(+). In Schizosaccharomyces pombe (strain 972 / ATCC 24843) (Fission yeast), this protein is Putative D-lactate dehydrogenase C713.03, mitochondrial.